The primary structure comprises 593 residues: NADH-quinone oxidoreductase subunit C/D (593 aa).

The NADH dehydrogenase I subunit C stretch occupies residues Met-1 to Gln-184. The segment at Asp-208 to Arg-593 is NADH dehydrogenase I subunit D.

In the N-terminal section; belongs to the complex I 30 kDa subunit family. The protein in the C-terminal section; belongs to the complex I 49 kDa subunit family. In terms of assembly, NDH-1 is composed of 13 different subunits. Subunits NuoB, CD, E, F, and G constitute the peripheral sector of the complex.

It localises to the cell inner membrane. The catalysed reaction is a quinone + NADH + 5 H(+)(in) = a quinol + NAD(+) + 4 H(+)(out). In terms of biological role, NDH-1 shuttles electrons from NADH, via FMN and iron-sulfur (Fe-S) centers, to quinones in the respiratory chain. The immediate electron acceptor for the enzyme in this species is believed to be ubiquinone. Couples the redox reaction to proton translocation (for every two electrons transferred, four hydrogen ions are translocated across the cytoplasmic membrane), and thus conserves the redox energy in a proton gradient. This Pseudomonas fluorescens (strain ATCC BAA-477 / NRRL B-23932 / Pf-5) protein is NADH-quinone oxidoreductase subunit C/D.